The primary structure comprises 218 residues: UPF0126 membrane protein SCO4104 (218 aa).

Transmembrane regions (helical) follow at residues 8 to 28 (LLAL…LTAV), 37 to 57 (GVVV…DVLI), 64 to 84 (AFLD…AFAV), 91 to 111 (LEPA…VIGA), 118 to 138 (GLAV…GGTI), 154 to 174 (LYAI…ETGV), and 179 to 199 (AALG…HFGI).

Belongs to the UPF0126 family.

The protein resides in the cell membrane. The sequence is that of UPF0126 membrane protein SCO4104 from Streptomyces coelicolor (strain ATCC BAA-471 / A3(2) / M145).